A 184-amino-acid chain; its full sequence is GMP synthase [glutamine-hydrolyzing] subunit A (184 aa).

Residues 3 to 184 form the Glutamine amidotransferase type-1 domain; that stretch reads PICVVNNYGQ…YENFDAICTE (182 aa). Residue cysteine 75 is the Nucleophile of the active site. Catalysis depends on residues histidine 162 and glutamate 164.

As to quaternary structure, heterodimer composed of a glutamine amidotransferase subunit (A) and a GMP-binding subunit (B).

The enzyme catalyses XMP + L-glutamine + ATP + H2O = GMP + L-glutamate + AMP + diphosphate + 2 H(+). The protein operates within purine metabolism; GMP biosynthesis; GMP from XMP (L-Gln route): step 1/1. Its function is as follows. Catalyzes the synthesis of GMP from XMP. This chain is GMP synthase [glutamine-hydrolyzing] subunit A, found in Methanoregula boonei (strain DSM 21154 / JCM 14090 / 6A8).